The chain runs to 377 residues: Histidinol-phosphate aminotransferase 2 (377 aa).

Positions 17–44 are disordered; the sequence is NLSPYVPGEQPQHDDLCKLNTNENPFPP. N6-(pyridoxal phosphate)lysine is present on lysine 228.

The protein belongs to the class-II pyridoxal-phosphate-dependent aminotransferase family. Histidinol-phosphate aminotransferase subfamily. As to quaternary structure, homodimer. It depends on pyridoxal 5'-phosphate as a cofactor.

It carries out the reaction L-histidinol phosphate + 2-oxoglutarate = 3-(imidazol-4-yl)-2-oxopropyl phosphate + L-glutamate. The protein operates within amino-acid biosynthesis; L-histidine biosynthesis; L-histidine from 5-phospho-alpha-D-ribose 1-diphosphate: step 7/9. The protein is Histidinol-phosphate aminotransferase 2 of Psychrobacter arcticus (strain DSM 17307 / VKM B-2377 / 273-4).